The chain runs to 232 residues: Phosphoribosylformylglycinamidine synthase subunit PurQ (232 aa).

Positions 2–232 (KIAILQFGGT…SMVDYITENF (231 aa)) constitute a Glutamine amidotransferase type-1 domain. Residue Cys-86 is the Nucleophile of the active site. Residues His-203 and Glu-205 contribute to the active site.

In terms of assembly, part of the FGAM synthase complex composed of 1 PurL, 1 PurQ and 2 PurS subunits.

The protein localises to the cytoplasm. The catalysed reaction is N(2)-formyl-N(1)-(5-phospho-beta-D-ribosyl)glycinamide + L-glutamine + ATP + H2O = 2-formamido-N(1)-(5-O-phospho-beta-D-ribosyl)acetamidine + L-glutamate + ADP + phosphate + H(+). It catalyses the reaction L-glutamine + H2O = L-glutamate + NH4(+). Its pathway is purine metabolism; IMP biosynthesis via de novo pathway; 5-amino-1-(5-phospho-D-ribosyl)imidazole from N(2)-formyl-N(1)-(5-phospho-D-ribosyl)glycinamide: step 1/2. In terms of biological role, part of the phosphoribosylformylglycinamidine synthase complex involved in the purines biosynthetic pathway. Catalyzes the ATP-dependent conversion of formylglycinamide ribonucleotide (FGAR) and glutamine to yield formylglycinamidine ribonucleotide (FGAM) and glutamate. The FGAM synthase complex is composed of three subunits. PurQ produces an ammonia molecule by converting glutamine to glutamate. PurL transfers the ammonia molecule to FGAR to form FGAM in an ATP-dependent manner. PurS interacts with PurQ and PurL and is thought to assist in the transfer of the ammonia molecule from PurQ to PurL. This chain is Phosphoribosylformylglycinamidine synthase subunit PurQ, found in Methanosarcina barkeri (strain Fusaro / DSM 804).